The chain runs to 145 residues: Halilectin 3, alpha chain (145 aa).

A glycan (N-linked (GlcNAc...) asparagine) is linked at Asn-73.

As to quaternary structure, probable heterotrimer consisting of an alpha chain and two beta chains. The alpha chain can probably have different glycosylation states. Glycosylated.

Functionally, lectin with affinity for N-acetyl-galactosamine, carragenan and glycoprotein porcine stomach mucin (PSM). Has metal-independent hemagglutinating activity towards erythrocytes from rabbit and human. Hemagglutinating activity is not inhibited by D-galactose, D-glucose, D-mannose, D-fucose, methyl-alpha-D-galactopyranoside, methyl-alpha-D-glucopyranoside, N-acetyl-glucosamine, N-acetyl-mannosamine, D-fructose, alpha-D-lactose, beta-D-lactose, D-lactulose, D-sucrose, fucoidan or glycoproteins thyroglobulin and ovalmucoid. This is Halilectin 3, alpha chain from Haliclona caerulea (Blue Caribbean sponge).